Reading from the N-terminus, the 635-residue chain is Threonine--tRNA ligase (635 aa).

The TGS domain maps to 1 to 61 (MINISFPDGS…DNDCKFRILT (61 aa)). A catalytic region spans residues 242–533 (DHRKLGRELD…LIEEYAGRFP (292 aa)). Positions 333, 384, and 510 each coordinate Zn(2+).

It belongs to the class-II aminoacyl-tRNA synthetase family. In terms of assembly, homodimer. Requires Zn(2+) as cofactor.

The protein resides in the cytoplasm. It carries out the reaction tRNA(Thr) + L-threonine + ATP = L-threonyl-tRNA(Thr) + AMP + diphosphate + H(+). Catalyzes the attachment of threonine to tRNA(Thr) in a two-step reaction: L-threonine is first activated by ATP to form Thr-AMP and then transferred to the acceptor end of tRNA(Thr). Also edits incorrectly charged L-seryl-tRNA(Thr). In Rickettsia rickettsii (strain Sheila Smith), this protein is Threonine--tRNA ligase.